Here is a 908-residue protein sequence, read N- to C-terminus: Mechanosensitive ion channel protein 8 (908 aa).

The span at 1-25 shows a compositional bias: polar residues; it reads MDFRNSFKSHSSYKQIRSPGDQSEP. Disordered stretches follow at residues 1 to 88, 148 to 172, 190 to 221, and 242 to 265; these read MDFR…HTAV, DQEN…SFDA, VAGS…LQEE, and VKTR…WRSG. Over residues 31-70 the composition is skewed to basic and acidic residues; the sequence is PILHDHHPDHSGMVVDDQKPDSTRSSLDDGRNAPVERDAS. 2 stretches are compositionally biased toward polar residues: residues 75–85 and 156–171; these read QDNTTGTSTDH and HQTM…TSFD. The segment covering 196 to 206 has biased composition (low complexity); sequence SSSSHSSSSSS. The segment covering 207-218 has biased composition (polar residues); the sequence is ATMRTNQDQPQL. Over residues 247–256 the composition is skewed to basic and acidic residues; it reads RLQDPPREEE. 6 helical membrane passes run 298–318, 341–361, 381–401, 411–431, 673–693, and 709–729; these read AITL…ACSL, LVLI…VFFI, AVQN…LFDK, FLPY…LWLI, MINI…LEIA, and AFIF…LFIV.

The protein belongs to the MscS (TC 1.A.23) family. In terms of tissue distribution, expressed in tricellular and mature pollen, and in germinating tube. Not detected in leaves or roots.

It is found in the cell membrane. Its subcellular location is the endomembrane system. With respect to regulation, not regulated by MgCl(2), ruthenium red or tetramethylammonium-Cl. Mechanosensitive channel that opens in response to stretch forces in the membrane lipid bilayer. Exhibits a 6.3-fold preference for chloride over sodium. Regulates osmotic forces during pollen hydration and germination. This chain is Mechanosensitive ion channel protein 8, found in Arabidopsis thaliana (Mouse-ear cress).